A 338-amino-acid polypeptide reads, in one-letter code: Probable family 20 transposase (338 aa).

This sequence belongs to the transposase 20 family.

Functionally, required for the transposition of an insertion element. The sequence is that of Probable family 20 transposase from Pseudomonas aeruginosa (strain ATCC 15692 / DSM 22644 / CIP 104116 / JCM 14847 / LMG 12228 / 1C / PRS 101 / PAO1).